The sequence spans 343 residues: MNKPILRVLRGEALPVPPVWLMRQAGRYLPEYREVRAKAGSFLGLATHPEWAAEVTLQPIRRFGMDAAILFSDILMLPWALGYGLHFAEGEGPVLPKLEEADIDRLDFSQLIPRIAPIMETVTRVREQLQQLHPETTLIGFAGAPFTVSCYMVDGGGAKEFPRTRHFAYTNPEAFDRLIARLTEATITYLSAQVEAGAEVLMLFDSWAGLLSPLSFARWVTAPARQITAALKARHPSVPVIGFPRLAGTLLQNYASETGVNAVGMDTSVDPAMARKMVPAEIALQGNLDPLALRAGGEAMRREVSSIRQAMAGHPHIFNLGHGIVPQTPPEHVAELLNLIRTI.

Residues arginine 23–arginine 27, aspartate 73, tyrosine 151, serine 206, and histidine 322 each bind substrate.

It belongs to the uroporphyrinogen decarboxylase family. Homodimer.

It is found in the cytoplasm. The catalysed reaction is uroporphyrinogen III + 4 H(+) = coproporphyrinogen III + 4 CO2. Its pathway is porphyrin-containing compound metabolism; protoporphyrin-IX biosynthesis; coproporphyrinogen-III from 5-aminolevulinate: step 4/4. Functionally, catalyzes the decarboxylation of four acetate groups of uroporphyrinogen-III to yield coproporphyrinogen-III. In Granulibacter bethesdensis (strain ATCC BAA-1260 / CGDNIH1), this protein is Uroporphyrinogen decarboxylase.